Consider the following 936-residue polypeptide: Protein SIEL (936 aa).

In terms of assembly, interacts with SHR, MGP, SCR, JKD, CPC, TMO7 and AGL21, but not with LFY or STM.

The protein resides in the nucleus. Its subcellular location is the endosome. The protein localises to the cytoplasm. It is found in the cell cortex. In terms of biological role, intracellular shuttle that promotes movement of SHR from the stele into the endodermis. Required for SHR association to endosomes and localization, and for intercellular movement of SHR. The chain is Protein SIEL from Arabidopsis thaliana (Mouse-ear cress).